Consider the following 230-residue polypeptide: Peptidyl-prolyl cis-trans isomerase FKBP16-4, chloroplastic (230 aa).

Residues 1-56 (MILTMKLVHPLHHSLSSSIPFPSRKRQSKPYRCSLPSPGCEKVIRTETVLPPAPVS) constitute a chloroplast transit peptide. The PPIase FKBP-type domain occupies 123 to 217 (GSRVAVHYVA…ELDIELLSIK (95 aa)).

This sequence belongs to the FKBP-type PPIase family.

It localises to the plastid. It is found in the chloroplast thylakoid lumen. It carries out the reaction [protein]-peptidylproline (omega=180) = [protein]-peptidylproline (omega=0). Functionally, PPIases accelerate the folding of proteins. It catalyzes the cis-trans isomerization of proline imidic peptide bonds in oligopeptides. The protein is Peptidyl-prolyl cis-trans isomerase FKBP16-4, chloroplastic (FKBP16-4) of Arabidopsis thaliana (Mouse-ear cress).